Reading from the N-terminus, the 310-residue chain is MAPTPNRTPIVAVVGATASGKTGLSLDLAERLRGEIVNTDAMQVYRGMDIGTAKLPVAERRGIPHHLLDTLTVRDPATVAEFQSWARAEIAEIRGRGRTPVLVGGSALYTRAILDRFEFPGTDEAVRRRLEAELDALGPAALHERLRAVDPEAATRILVENGRRIVRALEVVEITGRPFTASLPTMEYADPRTVQVGVDIDRPTLDARIVARVDAMFAAGFVEEVERLLAEGLAEGRTAGRAIGYREVASYLTGELSLAEARERTVSATRRFSRRQDSWFRKDPRVTWIRYDDPGLVDRAVSVVAATLDG.

15-22 (GATASGKT) provides a ligand contact to ATP. 17–22 (TASGKT) contacts substrate.

The protein belongs to the IPP transferase family. In terms of assembly, monomer. The cofactor is Mg(2+).

The catalysed reaction is adenosine(37) in tRNA + dimethylallyl diphosphate = N(6)-dimethylallyladenosine(37) in tRNA + diphosphate. Functionally, catalyzes the transfer of a dimethylallyl group onto the adenine at position 37 in tRNAs that read codons beginning with uridine, leading to the formation of N6-(dimethylallyl)adenosine (i(6)A). The polypeptide is tRNA dimethylallyltransferase (Nocardioides sp. (strain ATCC BAA-499 / JS614)).